The primary structure comprises 209 residues: Mei4-dependent protein 1 (209 aa).

A signal peptide spans Met-1–Ser-22.

Its subcellular location is the secreted. This Schizosaccharomyces pombe (strain 972 / ATCC 24843) (Fission yeast) protein is Mei4-dependent protein 1 (mde1).